The chain runs to 191 residues: Ribosome hibernation promotion factor (191 aa).

The segment at 100–123 (KQRQEGRPEPLPGPAEAEVNAQGS) is disordered.

This sequence belongs to the HPF/YfiA ribosome-associated protein family. Long HPF subfamily. As to quaternary structure, interacts with 100S ribosomes.

It localises to the cytoplasm. Its function is as follows. Required for dimerization of active 70S ribosomes into 100S ribosomes in stationary phase; 100S ribosomes are translationally inactive and sometimes present during exponential growth. In Deinococcus radiodurans (strain ATCC 13939 / DSM 20539 / JCM 16871 / CCUG 27074 / LMG 4051 / NBRC 15346 / NCIMB 9279 / VKM B-1422 / R1), this protein is Ribosome hibernation promotion factor.